The primary structure comprises 157 residues: 2-C-methyl-D-erythritol 2,4-cyclodiphosphate synthase (157 aa).

Residues Asp-8 and His-10 each coordinate a divalent metal cation. Residues 8–10 (DVH) and 34–35 (HS) contribute to the 4-CDP-2-C-methyl-D-erythritol 2-phosphate site. A divalent metal cation is bound at residue His-42. Residues 56 to 58 (DIG), 61 to 65 (FPDTD), 100 to 106 (AQAPKMA), 132 to 135 (TTTE), Phe-139, and Arg-142 contribute to the 4-CDP-2-C-methyl-D-erythritol 2-phosphate site.

The protein belongs to the IspF family. As to quaternary structure, homotrimer. The cofactor is a divalent metal cation.

It carries out the reaction 4-CDP-2-C-methyl-D-erythritol 2-phosphate = 2-C-methyl-D-erythritol 2,4-cyclic diphosphate + CMP. Its pathway is isoprenoid biosynthesis; isopentenyl diphosphate biosynthesis via DXP pathway; isopentenyl diphosphate from 1-deoxy-D-xylulose 5-phosphate: step 4/6. In terms of biological role, involved in the biosynthesis of isopentenyl diphosphate (IPP) and dimethylallyl diphosphate (DMAPP), two major building blocks of isoprenoid compounds. Catalyzes the conversion of 4-diphosphocytidyl-2-C-methyl-D-erythritol 2-phosphate (CDP-ME2P) to 2-C-methyl-D-erythritol 2,4-cyclodiphosphate (ME-CPP) with a corresponding release of cytidine 5-monophosphate (CMP). The chain is 2-C-methyl-D-erythritol 2,4-cyclodiphosphate synthase from Pseudomonas fluorescens (strain SBW25).